Here is a 350-residue protein sequence, read N- to C-terminus: Vetispiradiene synthase 3 (350 aa).

5 residues coordinate Mg(2+): Asp-103, Asp-107, Asp-246, Thr-250, and Glu-254. Residues 103–107 (DDTFD) carry the DDXXD motif motif.

The protein belongs to the terpene synthase family. Tpsa subfamily. Mg(2+) serves as cofactor.

Its subcellular location is the cytoplasm. The enzyme catalyses (2E,6E)-farnesyl diphosphate = (-)-vetispiradiene + diphosphate. Its pathway is secondary metabolite biosynthesis; terpenoid biosynthesis. Functionally, sesquiterpene synthase that catalyzes the formation of vetispiradiene from trans,trans-farnesyl diphosphate. The initial internal cyclization produces the monocyclic intermediate germacrene A. This is Vetispiradiene synthase 3 from Hyoscyamus muticus (Egyptian henbane).